We begin with the raw amino-acid sequence, 163 residues long: Nucleotide-binding protein YajQ (163 aa).

Belongs to the YajQ family.

Nucleotide-binding protein. The protein is Nucleotide-binding protein YajQ of Salmonella typhi.